The primary structure comprises 750 residues: Neprilysin (750 aa).

Over residues 1–14 (MGKSESQMDITDIN) the composition is skewed to polar residues. The disordered stretch occupies residues 1–20 (MGKSESQMDITDINTPKPKK). Gly2 carries N-myristoyl glycine lipidation. Residues 2–28 (GKSESQMDITDINTPKPKKKQRWTPLE) are Cytoplasmic-facing. Phosphoserine is present on residues Ser4 and Ser6. The short motif at 16–23 (PKPKKKQR) is the Stop-transfer sequence element. Residues 29 to 51 (ISLSVLVLLLTIIAVTMIALYAT) traverse the membrane as a helical; Signal-anchor for type II membrane protein segment. Topologically, residues 52 to 750 (YDDGICKSSD…MNPEKKCRVW (699 aa)) are extracellular. Positions 56-750 (ICKSSDCIKS…MNPEKKCRVW (695 aa)) constitute a Peptidase M13 domain. 6 cysteine pairs are disulfide-bonded: Cys57/Cys62, Cys80/Cys735, Cys88/Cys695, Cys143/Cys411, Cys234/Cys242, and Cys621/Cys747. An a peptide-binding site is contributed by Arg103. A glycan (N-linked (GlcNAc...) asparagine) is linked at Asn145. Residues Asn285, Asn311, Asn325, and Asn335 are each glycosylated (N-linked (GlcNAc...) asparagine). A Zn(2+)-binding site is contributed by His584. Residue Glu585 is part of the active site. His588 is a Zn(2+) binding site. An N-linked (GlcNAc...) asparagine glycan is attached at Asn628. Glu647 contacts Zn(2+). The Proton donor role is filled by Asp651.

Belongs to the peptidase M13 family. It depends on Zn(2+) as a cofactor. Post-translationally, myristoylation is a determinant of membrane targeting. Glycosylation at Asn-628 is necessary both for surface expression and neutral endopeptidase activity.

The protein resides in the cell membrane. The enzyme catalyses Preferential cleavage of polypeptides between hydrophobic residues, particularly with Phe or Tyr at P1'.. The catalysed reaction is substance P + H2O = substance P(1-9) + L-Leu-L-Met-NH2. It catalyses the reaction substance P + H2O = substance P(1-7) + L-Phe-Gly-L-Leu-L-Met-NH2. It carries out the reaction neurotensin + H2O = neurotensin(1-11) + L-isoleucyl-L-leucine. The enzyme catalyses neurotensin + H2O = neurotensin(1-10) + L-tyrosyl-L-isoleucyl-L-leucine. Its function is as follows. Thermolysin-like specificity, but is almost confined on acting on polypeptides of up to 30 amino acids. Biologically important in the destruction of opioid peptides such as Met- and Leu-enkephalins by cleavage of a Gly-Phe bond. Catalyzes cleavage of bradykinin, substance P and neurotensin peptides. Able to cleave angiotensin-1, angiotensin-2 and angiotensin 1-9. Involved in the degradation of atrial natriuretic factor (ANF) and brain natriuretic factor (BNP(1-32)). Displays UV-inducible elastase activity toward skin preelastic and elastic fibers. The chain is Neprilysin (MME) from Pongo abelii (Sumatran orangutan).